The primary structure comprises 190 residues: Peptidyl-tRNA hydrolase (190 aa).

Tyr-18 contacts tRNA. His-23 (proton acceptor) is an active-site residue. TRNA is bound by residues Phe-69, Asn-71, and Asn-117.

The protein belongs to the PTH family. As to quaternary structure, monomer.

It localises to the cytoplasm. It catalyses the reaction an N-acyl-L-alpha-aminoacyl-tRNA + H2O = an N-acyl-L-amino acid + a tRNA + H(+). Functionally, hydrolyzes ribosome-free peptidyl-tRNAs (with 1 or more amino acids incorporated), which drop off the ribosome during protein synthesis, or as a result of ribosome stalling. Catalyzes the release of premature peptidyl moieties from peptidyl-tRNA molecules trapped in stalled 50S ribosomal subunits, and thus maintains levels of free tRNAs and 50S ribosomes. The protein is Peptidyl-tRNA hydrolase of Rhodococcus jostii (strain RHA1).